Consider the following 399-residue polypeptide: Ribose-phosphate pyrophosphokinase 2, chloroplastic (399 aa).

The transit peptide at 1–32 (MAAKAAALSSSPFVSSRRLSSPAASLRARTPR) directs the protein to the chloroplast. Residues Asp-214, His-216, Asp-225, and Asp-229 each contribute to the Mg(2+) site. Positions 299–314 (GKVAIMVDDMIDTAGT) are binding of phosphoribosylpyrophosphate.

The protein belongs to the ribose-phosphate pyrophosphokinase family. Requires Mg(2+) as cofactor.

The protein resides in the plastid. The protein localises to the chloroplast. It carries out the reaction D-ribose 5-phosphate + ATP = 5-phospho-alpha-D-ribose 1-diphosphate + AMP + H(+). The chain is Ribose-phosphate pyrophosphokinase 2, chloroplastic from Oryza sativa subsp. japonica (Rice).